A 25-amino-acid chain; its full sequence is Spinigerin (25 aa).

The protein resides in the secreted. Active against Gram-positive bacteria B.megaterium and M.luteus, Gram-negative bacteria E.coli SBS363 and D22, K.pneumoniae, S.typhimurium and P.aeruginosa, yeast C.albicans and filamentous fungi F.culmorum, N.crassa, N.hematococca and T.viridae. Inactive against Gram-positive bacteria B.subtilis, S.pyogenes, B.thuringiensis and S.aureus, Gram-negative bacteria E.cloacae and E.carotovora and filamentous fungus B.bassiana. The protein is Spinigerin of Pseudacanthotermes spiniger.